Reading from the N-terminus, the 384-residue chain is F-box A protein 224 (384 aa).

An F-box domain is found at 71 to 122 (PKSLSDFPIGVMYDVLGHVDPFERLVLRKVSRNLRDVVQKMRCELDALYVNK).

This sequence belongs to the FTH family.

This chain is F-box A protein 224 (fbxa-224), found in Caenorhabditis elegans.